Reading from the N-terminus, the 102-residue chain is Small ribosomal subunit protein bS18 (102 aa).

This sequence belongs to the bacterial ribosomal protein bS18 family. Part of the 30S ribosomal subunit. Forms a tight heterodimer with protein bS6.

Functionally, binds as a heterodimer with protein bS6 to the central domain of the 16S rRNA, where it helps stabilize the platform of the 30S subunit. The sequence is that of Small ribosomal subunit protein bS18 from Orientia tsutsugamushi (strain Ikeda) (Rickettsia tsutsugamushi).